Consider the following 189-residue polypeptide: Crossover junction endodeoxyribonuclease RuvC (189 aa).

Active-site residues include D7, E68, and D141. D7, E68, and D141 together coordinate Mg(2+).

This sequence belongs to the RuvC family. As to quaternary structure, homodimer which binds Holliday junction (HJ) DNA. The HJ becomes 2-fold symmetrical on binding to RuvC with unstacked arms; it has a different conformation from HJ DNA in complex with RuvA. In the full resolvosome a probable DNA-RuvA(4)-RuvB(12)-RuvC(2) complex forms which resolves the HJ. It depends on Mg(2+) as a cofactor.

It is found in the cytoplasm. It catalyses the reaction Endonucleolytic cleavage at a junction such as a reciprocal single-stranded crossover between two homologous DNA duplexes (Holliday junction).. The RuvA-RuvB-RuvC complex processes Holliday junction (HJ) DNA during genetic recombination and DNA repair. Endonuclease that resolves HJ intermediates. Cleaves cruciform DNA by making single-stranded nicks across the HJ at symmetrical positions within the homologous arms, yielding a 5'-phosphate and a 3'-hydroxyl group; requires a central core of homology in the junction. The consensus cleavage sequence is 5'-(A/T)TT(C/G)-3'. Cleavage occurs on the 3'-side of the TT dinucleotide at the point of strand exchange. HJ branch migration catalyzed by RuvA-RuvB allows RuvC to scan DNA until it finds its consensus sequence, where it cleaves and resolves the cruciform DNA. The sequence is that of Crossover junction endodeoxyribonuclease RuvC from Rhodococcus jostii (strain RHA1).